Here is a 443-residue protein sequence, read N- to C-terminus: Xaa-Pro dipeptidase (443 aa).

Residues D246, D257, H339, E384, and E423 each contribute to the Mn(2+) site.

Belongs to the peptidase M24B family. Bacterial-type prolidase subfamily. Requires Mn(2+) as cofactor.

The enzyme catalyses Xaa-L-Pro dipeptide + H2O = an L-alpha-amino acid + L-proline. Its function is as follows. Splits dipeptides with a prolyl residue in the C-terminal position. The sequence is that of Xaa-Pro dipeptidase from Klebsiella pneumoniae subsp. pneumoniae (strain ATCC 700721 / MGH 78578).